The chain runs to 645 residues: Serine/threonine-protein kinase BUR1 (645 aa).

Positions 55–379 (YREEEKLGQG…AMKAKKHPFF (325 aa)) constitute a Protein kinase domain. ATP is bound by residues 61–69 (LGQGTFGEV) and lysine 84. Aspartate 208 serves as the catalytic Proton acceptor. 3 disordered regions span residues 407 to 428 (EMNE…STDN), 442 to 513 (ASIP…KYPA), and 533 to 645 (RYRN…ADYY). Polar residues-rich tracts occupy residues 409–428 (NESM…STDN) and 457–474 (IPAQ…TQNI). Pro residues predominate over residues 477-486 (EPIPTAPLPK). Polar residues predominate over residues 578-598 (NRYQNQDYNTSRNTGYNQYSQ).

Belongs to the protein kinase superfamily. CMGC Ser/Thr protein kinase family. CDC2/CDKX subfamily.

The protein localises to the nucleus. It catalyses the reaction L-seryl-[protein] + ATP = O-phospho-L-seryl-[protein] + ADP + H(+). It carries out the reaction L-threonyl-[protein] + ATP = O-phospho-L-threonyl-[protein] + ADP + H(+). The enzyme catalyses [DNA-directed RNA polymerase] + ATP = phospho-[DNA-directed RNA polymerase] + ADP + H(+). Functionally, serine/threonine-protein kinase involved in transcription regulation. Phosphorylates the UBC2/RAD6 ubiquitin-conjugating enzyme (E2), leading to monoubiquitination of histone H2B and the silencing of telomeric-associated genes. Also required for histone H3 methylation. Necessary for the recovery from pheromone-induced growth arrest in the cell cycle G1 phase. The protein is Serine/threonine-protein kinase BUR1 (BUR1) of Kluyveromyces lactis (strain ATCC 8585 / CBS 2359 / DSM 70799 / NBRC 1267 / NRRL Y-1140 / WM37) (Yeast).